Reading from the N-terminus, the 174-residue chain is Gamma-crystallin A (174 aa).

Beta/gamma crystallin 'Greek key' domains lie at 2–40 and 41–83; these read GKITFYEDRGFQGRCYECSSDCPNLQTYFSRCNSIRVDS and GCWM…RSIP. The tract at residues 84–87 is connecting peptide; sequence YTSS. Beta/gamma crystallin 'Greek key' domains follow at residues 88 to 128 and 129 to 171; these read HRIR…HVLE and GCWV…RRVM.

This sequence belongs to the beta/gamma-crystallin family.

Crystallins are the dominant structural components of the vertebrate eye lens. The sequence is that of Gamma-crystallin A (Cryga) from Mus musculus (Mouse).